Consider the following 421-residue polypeptide: MEKMHITNQEHDAFVKSNPNGDLLQLTKWAETKKLTGWYARRIAVGRDGEIQGVAQLLFKKVPKLPYTLCYISRGFVVDYSNKEALNALLDSAKEIAKAEKAYAIKIDPDVEVDKGTDALQNLKALGFKHKGFKEGLSKDYIQPRMTMITPIDKNDDELLNSFERRNRSKVRLALKRGTTVERSDREGLKTFAELMKITGERDGFLTRDISYFENIYDALHEDGDAELFLVKLDPKENIAKVNQELNELHAEIAKWQQKMETSEKQAKKAQNMINDAQNKIAKNEDLKRDLEALEKEHPEGIYLSGALLMFAGSKSYYLYGASSNEFRDFLPNHHMQYTMMKYAREHGATTYDFGGTDNDPDKDSEHYGLWAFKKVWGTYLSEKIGEFDYVLNQPLYQLIEQVKPRLTKAKIKISRKLKRK.

This sequence belongs to the FemABX family. As to quaternary structure, monomer.

It is found in the cytoplasm. It carries out the reaction beta-D-GlcNAc-(1-&gt;4)-Mur2Ac(oyl-L-Ala-D-isoglutaminyl-L-Lys-D-Ala-D-Ala)-di-trans,octa-cis-undecaprenyl diphosphate + glycyl-tRNA(Gly) = beta-D-GlcNAc-(1-&gt;4)-Mur2Ac(oyl-L-Ala-D-isoglutaminyl-L-Lys-(N(6)-Gly)-D-Ala-D-Ala)-di-trans,octa-cis-undecaprenyl diphosphate + tRNA(Gly) + H(+). Its function is as follows. Catalyzes the incorporation of the first glycine of the pentaglycine interpeptide bridge, which is characteristic of the S.aureus peptidoglycan. This glycine is added to the epsilon-amino group of the L-lysine of the membrane-bound lipid II intermediate (GlcNAc-(beta-1,4)-N-acetylmuramic acid(-L-Ala-D-iGln-L-Lys-D-Ala-D-Ala)-pyrophosphoryl-undecaprenol), using glycyl-tRNA(Gly) as donor, in a ribosome-independent mechanism. Involved in methicillin resistance. In Staphylococcus aureus (strain MRSA252), this protein is Lipid II:glycine glycyltransferase (femX).